The following is a 900-amino-acid chain: Isoleucine--tRNA ligase (900 aa).

The 'HIGH' region signature appears at 58 to 68; the sequence is PYANGNIHIGH. Glu552 is an L-isoleucyl-5'-AMP binding site. A 'KMSKS' region motif is present at residues 593-597; it reads KMSKS. Lys596 provides a ligand contact to ATP.

It belongs to the class-I aminoacyl-tRNA synthetase family. IleS type 1 subfamily. As to quaternary structure, monomer.

The protein resides in the cytoplasm. It catalyses the reaction tRNA(Ile) + L-isoleucine + ATP = L-isoleucyl-tRNA(Ile) + AMP + diphosphate. Functionally, catalyzes the attachment of isoleucine to tRNA(Ile). As IleRS can inadvertently accommodate and process structurally similar amino acids such as valine, to avoid such errors it has two additional distinct tRNA(Ile)-dependent editing activities. One activity is designated as 'pretransfer' editing and involves the hydrolysis of activated Val-AMP. The other activity is designated 'posttransfer' editing and involves deacylation of mischarged Val-tRNA(Ile). The protein is Isoleucine--tRNA ligase of Ureaplasma parvum serovar 3 (strain ATCC 700970).